Reading from the N-terminus, the 128-residue chain is Large ribosomal subunit protein uL22 (128 aa).

The protein belongs to the universal ribosomal protein uL22 family. Part of the 50S ribosomal subunit.

Functionally, this protein binds specifically to 23S rRNA; its binding is stimulated by other ribosomal proteins, e.g. L4, L17, and L20. It is important during the early stages of 50S assembly. It makes multiple contacts with different domains of the 23S rRNA in the assembled 50S subunit and ribosome. The globular domain of the protein is located near the polypeptide exit tunnel on the outside of the subunit, while an extended beta-hairpin is found that lines the wall of the exit tunnel in the center of the 70S ribosome. The protein is Large ribosomal subunit protein uL22 of Rhodopseudomonas palustris (strain HaA2).